The following is a 479-amino-acid chain: Dynein regulatory complex subunit 4 (479 aa).

Coiled coils occupy residues arginine 28 to isoleucine 93, arginine 117 to lysine 170, and glutamate 210 to glutamate 347.

This sequence belongs to the DRC4 family.

The protein localises to the cytoplasm. Its subcellular location is the cytoskeleton. It is found in the flagellum basal body. Its function is as follows. Cytoskeletal linker which probably functions in axonemal and non-axonemal dynein regulation. May play a role in the spermatozoa motility. This is Dynein regulatory complex subunit 4 from Drosophila melanogaster (Fruit fly).